The chain runs to 344 residues: tRNA N6-adenosine threonylcarbamoyltransferase (344 aa).

The Fe cation site is built by H112 and H116. Substrate-binding positions include 134–138, D167, G180, and N280; that span reads LASGG. D308 contributes to the Fe cation binding site.

Belongs to the KAE1 / TsaD family. Requires Fe(2+) as cofactor.

Its subcellular location is the cytoplasm. The enzyme catalyses L-threonylcarbamoyladenylate + adenosine(37) in tRNA = N(6)-L-threonylcarbamoyladenosine(37) in tRNA + AMP + H(+). In terms of biological role, required for the formation of a threonylcarbamoyl group on adenosine at position 37 (t(6)A37) in tRNAs that read codons beginning with adenine. Is involved in the transfer of the threonylcarbamoyl moiety of threonylcarbamoyl-AMP (TC-AMP) to the N6 group of A37, together with TsaE and TsaB. TsaD likely plays a direct catalytic role in this reaction. This chain is tRNA N6-adenosine threonylcarbamoyltransferase, found in Rickettsia peacockii (strain Rustic).